Reading from the N-terminus, the 292-residue chain is F-box only protein 16 (292 aa).

The F-box domain occupies 86 to 132; that stretch reads LDFTTKLPRVLSLYIFSFLDPRSLCRCAQVCWHWKNLAELDQLWMLK. Disordered stretches follow at residues 188–224 and 238–292; these read SPEEKQSPLSAFRSSSSLRKKNNSGEKALPPWRSSDK and RDPM…PLCP. Positions 194–204 are enriched in low complexity; it reads SPLSAFRSSSS. Positions 260–273 are enriched in basic and acidic residues; sequence RQSHDKKNKLQDRT.

In terms of assembly, part of a SCF (SKP1-cullin-F-box) protein ligase complex. As to expression, expressed in heart, spleen and colon.

Probably recognizes and binds to some phosphorylated proteins and promotes their ubiquitination and degradation. This is F-box only protein 16 (FBXO16) from Homo sapiens (Human).